A 112-amino-acid chain; its full sequence is Putative UPF0320 protein YEL074W (112 aa).

Residues 93 to 112 (EKSPSKSPKHKNILPFNFTK) are disordered.

The protein belongs to the UPF0320 family.

This Saccharomyces cerevisiae (strain ATCC 204508 / S288c) (Baker's yeast) protein is Putative UPF0320 protein YEL074W.